We begin with the raw amino-acid sequence, 51 residues long: Insulin (51 aa).

Intrachain disulfides connect Cys7–Cys37, Cys19–Cys50, and Cys36–Cys41.

This sequence belongs to the insulin family. Heterodimer of a B chain and an A chain linked by two disulfide bonds.

It localises to the secreted. Functionally, insulin decreases blood glucose concentration. It increases cell permeability to monosaccharides, amino acids and fatty acids. It accelerates glycolysis, the pentose phosphate cycle, and glycogen synthesis in liver. The sequence is that of Insulin (INS) from Meleagris gallopavo (Wild turkey).